The sequence spans 3841 residues: Transformation/transcription domain-associated protein (3841 aa).

Disordered stretches follow at residues 491–516 (TPTV…PPAT) and 2002–2027 (QQPE…MKRG). A compositionally biased stretch (pro residues) spans 498 to 515 (ALPPPAPPTPVTPAPPPA). Residues 2025–2040 (KRGMSVDSAQDVKRFR) carry the Bipartite nuclear localization signal motif. An FAT domain is found at 2671-3239 (VLKYLGKTHN…YFPIRTLYLT (569 aa)). The tract at residues 3249–3271 (KSDSGQQQPSSAAAQTHSASDPG) is disordered. Over residues 3251 to 3268 (DSGQQQPSSAAAQTHSAS) the composition is skewed to low complexity. Residues 3482–3805 (MPRVEIVQKH…AVTAIMTRLH (324 aa)) form the PI3K/PI4K catalytic domain. The interval 3488–3494 (VQKHNTA) is G-loop. A catalytic loop region spans residues 3669 to 3677 (HLNRLNPEM). Positions 3689-3714 (VSYFRFDINDATGDLDANRPVPFRLT) are activation loop. The 33-residue stretch at 3809–3841 (QFEGGESKVNTLVAAANSLDNLCRMDPAWHPWL) folds into the FATC domain.

The protein belongs to the PI3/PI4-kinase family. TRA1 subfamily.

Its subcellular location is the nucleus. Adapter protein, which is found in various multiprotein chromatin complexes with histone acetyltransferase activity (HAT), which gives a specific tag for epigenetic transcription activation. May be required for the mitotic checkpoint and normal cell cycle progression. May play a role in the formation and maintenance of the auditory system. The sequence is that of Transformation/transcription domain-associated protein from Danio rerio (Zebrafish).